The following is a 1271-amino-acid chain: Protein flightless-1 homolog (1271 aa).

The residue at position 1 (M1) is an N-acetylmethionine. An interaction with LRRFIP1 and LRRFIP2 region spans residues 1–427; sequence MEATGVLPFV…SGSKDPLARK (427 aa). LRR repeat units lie at residues 7–32, 33–55, 56–78, 80–103, 104–126, 127–149, 150–173, 175–196, 197–222, 223–245, 247–268, 269–291, 293–316, 317–339, 340–363, and 365–385; these read LPFV…VKAM, TSLR…LAAL, QKLE…LSSL, SLRA…IFKL, DDLS…LENA, KNML…LFIN, LTDL…MRRL, HLQT…QLPA, MMAL…LEGL, SNLS…LYTL, SLRR…IDQW, VHLE…ICKL, KLKK…IGKL, TSLE…LCRC, PKLK…HFLT, and IQVL…PADR. K21 carries the post-translational modification N6-acetyllysine. S406 is modified (phosphoserine). S436 bears the Phosphoserine; by SGK3 mark. The interval 495–827 is interaction with ACTL6A; it reads VGQLPGLTIW…VVSRSLEGTE (333 aa). Gelsolin-like repeat units lie at residues 509 to 591, 629 to 703, and 759 to 831; these read FVPV…EEFL, NIKL…PGFW, and LMPG…AQVF. At S860 the chain carries Phosphoserine. The tract at residues 951 to 977 is disordered; the sequence is KTEDKEGKASAEAREGEEAAAEAEEKQ. Residues 952-967 show a composition bias toward basic and acidic residues; sequence TEDKEGKASAEAREGE. Over residues 968 to 977 the composition is skewed to acidic residues; that stretch reads EAAAEAEEKQ. One copy of the Gelsolin-like 4 repeat lies at 1183-1256; that stretch reads KCSDFCQDDL…VRKGNEQRAF (74 aa).

In terms of assembly, interacts with actin, ACTL6A and NCOA2. Interacts with CARM1. Interacts with LRRFIP1, LRRFIP2 and MYD88. Upon LPS stimulation, LRRFIP2 competes for MYD88-binding; LRRFIP1 constitutively blocks the interaction with MyD88, even in the absence of LPS. Interacts with the nuclear receptors ESR1 and THRB. Interacts with SGK3. Interacts (via the gelsolin-like region) with TMOD1 and TMOD3. Interacts with LMOD2, VCL, GSN and DES. In terms of tissue distribution, expressed in blastocyst.

It is found in the nucleus. The protein resides in the cytoplasm. It localises to the cytoskeleton. The protein localises to the microtubule organizing center. Its subcellular location is the centrosome. It is found in the cell junction. The protein resides in the focal adhesion. It localises to the cell projection. The protein localises to the podosome. Is a regulator of actin polymerization, required for proper myofibril organization and regulation of the length of sarcomeric thin filaments. It also plays a role in the assembly of cardiomyocyte cell adhesion complexes. Regulates cytoskeletal rearrangements involved in cytokinesis and cell migration, by inhibiting Rac1-dependent paxillin phosphorylation. May play a role as coactivator in transcriptional activation by hormone-activated nuclear receptors (NR) and acts in cooperation with NCOA2 and CARM1. Involved in estrogen hormone signaling. The chain is Protein flightless-1 homolog (Flii) from Mus musculus (Mouse).